The following is a 340-amino-acid chain: Eukaryotic translation initiation factor 3 subunit I (340 aa).

WD repeat units follow at residues 8-47 (GHER…RLGT), 50-91 (GHQG…KVWD), 150-189 (CTES…QLEN), 194-233 (EFDH…ILKT), and 291-330 (GHFG…FDFM).

This sequence belongs to the eIF-3 subunit I family. In terms of assembly, component of the eukaryotic translation initiation factor 3 (eIF-3) complex.

The protein resides in the cytoplasm. Functionally, component of the eukaryotic translation initiation factor 3 (eIF-3) complex, which is involved in protein synthesis of a specialized repertoire of mRNAs and, together with other initiation factors, stimulates binding of mRNA and methionyl-tRNAi to the 40S ribosome. The eIF-3 complex specifically targets and initiates translation of a subset of mRNAs involved in cell proliferation. This is Eukaryotic translation initiation factor 3 subunit I (tif34) from Neosartorya fischeri (strain ATCC 1020 / DSM 3700 / CBS 544.65 / FGSC A1164 / JCM 1740 / NRRL 181 / WB 181) (Aspergillus fischerianus).